The chain runs to 263 residues: Izumo sperm-egg fusion protein 3 (263 aa).

An N-terminal signal peptide occupies residues 1–22 (MGDLWVLLFSSLSLAAFHGVRG). At 23 to 176 (CLECDPKFTE…EDPKTAENRE (154 aa)) the chain is on the extracellular side. Residues Asn-98 and Asn-128 are each glycosylated (N-linked (GlcNAc...) asparagine). A helical transmembrane segment spans residues 177–197 (ISLYLIFIAEAVILASAVLLF). Residues 198 to 263 (HVCISHRRKM…CAESEMQTGT (66 aa)) lie on the Cytoplasmic side of the membrane. Positions 241–263 (GRSNSNSLTGEPTCAESEMQTGT) are disordered.

Belongs to the Izumo family. Monomer and homodimer. In terms of tissue distribution, sperm-specific (at protein level).

It is found in the cell membrane. It localises to the cytoplasmic vesicle. The protein resides in the secretory vesicle. The protein localises to the acrosome inner membrane. Plays an important role in the biogenesis of the acrosome during sperm development. The sequence is that of Izumo sperm-egg fusion protein 3 (Izumo3) from Mus musculus (Mouse).